The sequence spans 673 residues: MALYGTLQLSHSLGLCRNQRFCNPENSAMRRRLHISNGPLSLGVPLGQHGFSNILLSNYLRRPICSVPCRTTAFRCHSFSASGKAIEPAVKAVTVVLTKSHGLMQQFPFVYKLVPAVALLVFSLWGLVPFARQGRNILLNKNDNGWKKSGTYHVMTSYVQPLLLWLGALFICRALDPVVLPTEASKIVKDRLLNFVRSLSTVLAFAYCLSSLIQQTQKLFSETSNPSDTRNMGFQFAGKALYSAVWVAAVSLFMELLGFSTQKWLTAGGLGTVLITLAGREILTNFLSSVMIHATRPFVLNEWIQTKIEGYEVSGTVEHVGWWSPTIIRGEDREAIHIPNHKFTVNVVRNLTQKTHWRIKTHLAISHLDVNKINNIVADMRKVLAKNPMVEQQRLHRRVFLENVIPENQALSILISCFVKTSHHEEYLGVKEAILLDLLRVISHHRARLATPIRTIRKMYTETDVENTPFGESMYGGVTSRRPLMLIEPAYKINGEDKSKSQNRAAKPTAEQENKGSNPKSKETSSPDLKANVKVGESPVSDTNKVPEETVAKPVIKAVSKPPTPKDTETSGTEKPKAKRSGGTIKSTKTDETDSSTSSASRSTLEENIVLGVALEGSKRTLPIEEEIHSPPMETDAKELTGARRSGGNGPLVADKEQKDSQSQPNSGASTEP.

The N-terminal 75 residues, 1–75, are a transit peptide targeting the chloroplast; it reads MALYGTLQLS…SVPCRTTAFR (75 aa). The next 5 membrane-spanning stretches (helical) occupy residues 107 to 127, 152 to 172, 193 to 213, 240 to 260, and 264 to 284; these read FPFV…LWGL, YHVM…LFIC, LNFV…SSLI, ALYS…LGFS, and WLTA…EILT. The disordered stretch occupies residues 492–673; that stretch reads KINGEDKSKS…QPNSGASTEP (182 aa). Composition is skewed to basic and acidic residues over residues 510–525, 564–576, and 617–642; these read AEQE…KETS, TPKD…TEKP, and GSKR…ELTG. At S571 the chain carries Phosphoserine. Polar residues predominate over residues 661-673; it reads SQSQPNSGASTEP.

The protein belongs to the MscS (TC 1.A.23) family. In terms of tissue distribution, widely expressed.

It is found in the plastid. The protein resides in the chloroplast membrane. Mechanosensitive channel that opens in response to stretch forces in the membrane lipid bilayer. Controls plastid size, shape, and perhaps division during normal plant development by altering ion flux in response to changes in membrane tension. Acts as a component of the chloroplast division machinery. This is Mechanosensitive ion channel protein 2, chloroplastic (MSL2) from Arabidopsis thaliana (Mouse-ear cress).